Here is a 229-residue protein sequence, read N- to C-terminus: NAD(P)H-quinone oxidoreductase subunit K, chloroplastic (229 aa).

[4Fe-4S] cluster is bound by residues C43, C44, C108, and C139.

Belongs to the complex I 20 kDa subunit family. As to quaternary structure, NDH is composed of at least 16 different subunits, 5 of which are encoded in the nucleus. [4Fe-4S] cluster serves as cofactor.

The protein resides in the plastid. The protein localises to the chloroplast thylakoid membrane. The enzyme catalyses a plastoquinone + NADH + (n+1) H(+)(in) = a plastoquinol + NAD(+) + n H(+)(out). It catalyses the reaction a plastoquinone + NADPH + (n+1) H(+)(in) = a plastoquinol + NADP(+) + n H(+)(out). In terms of biological role, NDH shuttles electrons from NAD(P)H:plastoquinone, via FMN and iron-sulfur (Fe-S) centers, to quinones in the photosynthetic chain and possibly in a chloroplast respiratory chain. The immediate electron acceptor for the enzyme in this species is believed to be plastoquinone. Couples the redox reaction to proton translocation, and thus conserves the redox energy in a proton gradient. The sequence is that of NAD(P)H-quinone oxidoreductase subunit K, chloroplastic from Piper cenocladum (Ant piper).